We begin with the raw amino-acid sequence, 696 residues long: Interleukin-1 receptor accessory protein-like 1 (696 aa).

A signal peptide spans 1–24 (MKAPIPHLILLYATFTQSLKVVTK). Residues 25 to 134 (RGSADGCTDW…YCMKVSISLT (110 aa)) form the Ig-like C2-type 1 domain. Topologically, residues 25 to 357 (RGSADGCTDW…LLHKRELMYT (333 aa)) are extracellular. 2 disulfides stabilise this stretch: cysteine 31-cysteine 126 and cysteine 53-cysteine 118. Asparagine 63, asparagine 122, and asparagine 138 each carry an N-linked (GlcNAc...) asparagine glycan. 2 disulfide bridges follow: cysteine 143-cysteine 185 and cysteine 164-cysteine 216. Ig-like C2-type domains follow at residues 143 to 232 (CYNS…TELT) and 242 to 350 (PKLL…VLLH). Residues asparagine 213, asparagine 264, and asparagine 331 are each glycosylated (N-linked (GlcNAc...) asparagine). Cysteine 267 and cysteine 334 form a disulfide bridge. A helical transmembrane segment spans residues 358–378 (VELAGGLGAILLLLVCSVTIY). The Cytoplasmic portion of the chain corresponds to 379–696 (KCYKIEIMLF…RETSISSVIW (318 aa)). Residues 403–559 (KDYDAYLSYT…KFWKRLQYEM (157 aa)) enclose the TIR domain. The active site involves glutamate 491. Residues 549–644 (SKFWKRLQYE…TGTLPLTSIG (96 aa)) form an interaction with NCS1 region. The disordered stretch occupies residues 659–680 (GQRPQTKSSREPNPDEAHTNSA). The span at 666–676 (SSREPNPDEAH) shows a compositional bias: basic and acidic residues.

It belongs to the interleukin-1 receptor family. Homodimer. Interacts (calcium-independent) with NCS1/FREQ. Interacts (via the first immunoglobilin domain) with PTPRD (via the second immunoglobilin domain); this interaction is PTPRD-splicing-dependent and induces pre- and post-synaptic differentiation of neurons and is required for IL1RAPL1-mediated synapse formation.

The protein resides in the cell membrane. It localises to the cytoplasm. It is found in the cell projection. Its subcellular location is the axon. The protein localises to the dendrite. It catalyses the reaction NAD(+) + H2O = ADP-D-ribose + nicotinamide + H(+). Its function is as follows. May regulate secretion and presynaptic differentiation through inhibition of the activity of N-type voltage-gated calcium channel. May activate the MAP kinase JNK. Plays a role in neurite outgrowth. During dendritic spine formation can bidirectionally induce pre- and post-synaptic differentiation of neurons by trans-synaptically binding to PTPRD. The polypeptide is Interleukin-1 receptor accessory protein-like 1 (Il1rapl1) (Rattus norvegicus (Rat)).